The sequence spans 231 residues: NADH-ubiquinone oxidoreductase chain 4 (231 aa).

7 helical membrane passes run 1-21, 34-54, 63-85, 89-111, 128-148, 169-189, and 211-231; these read PIAG…YGII, MFLP…LTCL, IAYS…TPWG, AMAL…NTTY, ILPM…ATPP, TIIL…HMFL, and LLMT…ELVI.

This sequence belongs to the complex I subunit 4 family.

It is found in the mitochondrion membrane. The enzyme catalyses a ubiquinone + NADH + 5 H(+)(in) = a ubiquinol + NAD(+) + 4 H(+)(out). Functionally, core subunit of the mitochondrial membrane respiratory chain NADH dehydrogenase (Complex I) that is believed to belong to the minimal assembly required for catalysis. Complex I functions in the transfer of electrons from NADH to the respiratory chain. The immediate electron acceptor for the enzyme is believed to be ubiquinone. The sequence is that of NADH-ubiquinone oxidoreductase chain 4 (MT-ND4) from Porthidium ophryomegas (Slender hognose viper).